Consider the following 533-residue polypeptide: MYQKFQISGKIVKTLGLKMKVLIAVSFGSLLFILSYSNNFNNKLLDATTKVDIKETEKPVDKLIGGLLTADFDEGSCLSRYHKYFLYRKPSPYKPSEYLVSKLRSYEMLHKRCGPDTEYYKEAIEKLSRDDASESNGECRYIVWVAGYGLGNRLLTLASVFLYALLTERIILVDNRKDVSDLLCEPFPGTSWLLPLDFPMLNYTYAWGYNKEYPRCYGTMSEKHSINSTSIPPHLYMHNLHDSRDSDKLFVCQKDQSLIDKVPWLIVQANVYFVPSLWFNPTFQTELVKLFPQKETVFHHLARYLFHPTNEVWDMVTDYYHAHLSKADERLGIQIRVFGKPDGRFKHVIDQVISCTQREKLLPEFATPEESKVNISKTPKLKSVLVASLYPEFSGNLTNMFSKRPSSTGEIVEVYQPSGERVQQTDKKSHDQKALAEMYLLSLTDNIVTSARSTFGYVSYSLGGLKPWLLYQPTNFTTPNPPCVRSKSMEPCYLTPPSHGCEADWGTNSGKILPFVRHCEDLIYGGLKLYDEF.

Topologically, residues 1–13 (MYQKFQISGKIVK) are cytoplasmic. A helical; Signal-anchor for type II membrane protein membrane pass occupies residues 14-34 (TLGLKMKVLIAVSFGSLLFIL). Residues 35–533 (SYSNNFNNKL…YGGLKLYDEF (499 aa)) lie on the Lumenal side of the membrane. Residues N202, N227, N374, N396, and N475 are each glycosylated (N-linked (GlcNAc...) asparagine).

This sequence belongs to the glycosyltransferase 37 family. As to expression, expressed in roots, leaves, flowers and siliques.

Its subcellular location is the golgi apparatus. The protein localises to the golgi stack membrane. It functions in the pathway protein modification; protein glycosylation. May be involved in cell wall biosynthesis. May act as a fucosyltransferase. The sequence is that of Probable fucosyltransferase 5 (FUT5) from Arabidopsis thaliana (Mouse-ear cress).